Consider the following 377-residue polypeptide: Prostaglandin E synthase 2 (377 aa).

The Lumenal portion of the chain corresponds to 1–57; the sequence is MDPAARVVRALWPGGCALAWRLGGRPQPLLPTQSRAGFAGAAGGPSPVAAARKGSPR. Residues 58-74 traverse the membrane as a helical segment; the sequence is LLGAAALALGGALGLYH. The Cytoplasmic portion of the chain corresponds to 75–377; sequence TARWHLRAQD…RAITEASPAH (303 aa). A Glutaredoxin domain is found at 90 to 193; it reads SAAQLSLSSR…EIITYYPAMK (104 aa). The residue at position 95 (serine 95) is a Phosphoserine. Residues valine 148 and 164–165 contribute to the glutathione site; that span reads DS. One can recognise a GST C-terminal domain in the interval 263–377; sequence YIVREGKFGA…RAITEASPAH (115 aa).

It belongs to the GST superfamily. As to quaternary structure, homodimer. May interact with CEBPB. Interacts with EXOSC10. In terms of processing, synthesized as a Golgi membrane-associated protein, and the proteolytic removal of the N-terminal hydrophobic domain leads to the formation of a mature cytosolic enzyme. As to expression, widely expressed. Expressed in the heart, including apex, inter-ventricular septum, both atria and ventricles, but not in the aorta. Also expressed in fetal heart. Detected in various regions of the brain: cerebellum; occipital, frontal and parietal lobes. Also expressed in the lymph nodes, skeletal muscle, kidney and trachea, but not in the thymus or lung. Overexpressed in colorectal cancer.

It is found in the golgi apparatus membrane. Its subcellular location is the cytoplasm. It localises to the perinuclear region. The catalysed reaction is prostaglandin H2 = prostaglandin E2. It carries out the reaction prostaglandin H2 = (12S)-hydroxy-(5Z,8E,10E)-heptadecatrienoate + malonaldehyde. Its pathway is lipid metabolism; prostaglandin biosynthesis. With respect to regulation, isomerase activity is increased by sulfhydril compounds. Dithiothreitol (DTT) is most effective, followed by dihydrolipoic acid, glutathione (GSH) and 2-mercaptoethanol. Functionally, isomerase that catalyzes the conversion of PGH2 into the more stable prostaglandin E2 (PGE2) (in vitro). The biological function and the GSH-dependent property of PTGES2 is still under debate. In vivo, PTGES2 could form a complex with GSH and heme and would not participate in PGE2 synthesis but would catalyze the degradation of prostaglandin E2 H2 (PGH2) to 12(S)-hydroxy-5(Z),8(E),10(E)-heptadecatrienoic acid (HHT) and malondialdehyde (MDA). In Homo sapiens (Human), this protein is Prostaglandin E synthase 2 (PTGES2).